The chain runs to 497 residues: Sperm motility kinase Z (497 aa).

Residues 28–275 (YTVLKTLSQH…AQDLLSHPWL (248 aa)) enclose the Protein kinase domain. ATP is bound by residues 34 to 42 (LSQHGTTEV) and lysine 57. Aspartate 146 acts as the Proton acceptor in catalysis. The UBA domain occupies 292–332 (FPDPDIMAAMKNIGFHVQDIRESLKHRKFDETMATYNLLRA). 2 disordered regions span residues 383 to 410 (TEEH…GRSQ) and 439 to 460 (SSQA…SCPL).

This sequence belongs to the protein kinase superfamily. CAMK Ser/Thr protein kinase family. Smok subfamily.

The enzyme catalyses L-seryl-[protein] + ATP = O-phospho-L-seryl-[protein] + ADP + H(+). It catalyses the reaction L-threonyl-[protein] + ATP = O-phospho-L-threonyl-[protein] + ADP + H(+). Functionally, may play a role in sperm motility, especially in the regulation of flagellar function. This Mus musculus (Mouse) protein is Sperm motility kinase Z (Gm4922).